The chain runs to 82 residues: Toxin Tpa7 (82 aa).

Residues 1–20 form the signal peptide; that stretch reads MKGMILLISCLMLIEVVVEC. The LCN-type CS-alpha/beta domain occupies 21 to 82; the sequence is KEGYPLDTLN…KIWDLKKNKC (62 aa). 4 disulfide bridges follow: cysteine 32/cysteine 82, cysteine 36/cysteine 58, cysteine 44/cysteine 63, and cysteine 48/cysteine 65.

The protein belongs to the long (4 C-C) scorpion toxin superfamily. Sodium channel inhibitor family. Beta subfamily. In terms of tissue distribution, expressed by the venom gland.

The protein localises to the secreted. Its function is as follows. Beta toxins bind voltage-independently at site-4 of sodium channels (Nav) and shift the voltage of activation toward more negative potentials thereby affecting sodium channel activation and promoting spontaneous and repetitive firing. This chain is Toxin Tpa7, found in Tityus pachyurus (Colombian scorpion).